A 248-amino-acid chain; its full sequence is Probable transcriptional regulatory protein Mchl_0946 (248 aa).

It belongs to the TACO1 family.

The protein localises to the cytoplasm. This is Probable transcriptional regulatory protein Mchl_0946 from Methylorubrum extorquens (strain CM4 / NCIMB 13688) (Methylobacterium extorquens).